Here is a 55-residue protein sequence, read N- to C-terminus: U2-theraphotoxin-Cg1a (55 aa).

Positions 1 to 19 (DSPAWLKSMERIFQSEERE) are excised as a propeptide. 3 disulfides stabilise this stretch: cysteine 20-cysteine 34, cysteine 27-cysteine 39, and cysteine 33-cysteine 47.

The protein belongs to the neurotoxin 10 (Hwtx-1) family. 06 (F4b) subfamily. As to expression, expressed by the venom gland.

Its subcellular location is the secreted. Its function is as follows. Probable ion channel inhibitor. The sequence is that of U2-theraphotoxin-Cg1a from Chilobrachys guangxiensis (Chinese earth tiger tarantula).